The chain runs to 195 residues: N-(5'-phosphoribosyl)anthranilate isomerase (195 aa).

This sequence belongs to the TrpF family.

The catalysed reaction is N-(5-phospho-beta-D-ribosyl)anthranilate = 1-(2-carboxyphenylamino)-1-deoxy-D-ribulose 5-phosphate. The protein operates within amino-acid biosynthesis; L-tryptophan biosynthesis; L-tryptophan from chorismate: step 3/5. The chain is N-(5'-phosphoribosyl)anthranilate isomerase from Streptococcus gordonii (strain Challis / ATCC 35105 / BCRC 15272 / CH1 / DL1 / V288).